Consider the following 362-residue polypeptide: F-box protein At2g14710 (362 aa).

The 47-residue stretch at Met-1–His-47 folds into the F-box domain.

The protein is F-box protein At2g14710 of Arabidopsis thaliana (Mouse-ear cress).